Consider the following 148-residue polypeptide: uncharacterized protein (148 aa).

The interval His122–Asp148 is disordered. Over residues Asn123–Arg134 the composition is skewed to basic residues.

This is an uncharacterized protein from Homo sapiens (Human).